A 368-amino-acid chain; its full sequence is Ribosomal RNA large subunit methyltransferase M (368 aa).

S-adenosyl-L-methionine contacts are provided by residues S199, 232 to 235 (APGG), D251, D271, and D287. The Proton acceptor role is filled by K316.

It belongs to the class I-like SAM-binding methyltransferase superfamily. RNA methyltransferase RlmE family. RlmM subfamily. In terms of assembly, monomer.

It is found in the cytoplasm. It catalyses the reaction cytidine(2498) in 23S rRNA + S-adenosyl-L-methionine = 2'-O-methylcytidine(2498) in 23S rRNA + S-adenosyl-L-homocysteine + H(+). Functionally, catalyzes the 2'-O-methylation at nucleotide C2498 in 23S rRNA. The protein is Ribosomal RNA large subunit methyltransferase M of Aromatoleum aromaticum (strain DSM 19018 / LMG 30748 / EbN1) (Azoarcus sp. (strain EbN1)).